A 264-amino-acid chain; its full sequence is MRIALGIEYDGTHYYGWQRQREVKSVQEALEKALSKIANHPVEVQCAGRTDAGVHGTGQVVHFDTTAERQMVAWTMGANANLPKDIAVRWAMAVPDEFHARFSATARRYRYVIYNHVYRPGILNSGVSHYHGELDVEKMQQAGQYLLGENDFTSFRAVHCQSRSPWRNVMHLNVTRHGRYVVIDIKANAFVHHMVRNITGSLIAVGRGEQKPEWIQWLLAQKDRTLAAATAKAEGLYLVSVDYPAHFGLPEMPIGPLFLPDNLN.

Aspartate 51 (nucleophile) is an active-site residue. Tyrosine 109 is a binding site for substrate.

Belongs to the tRNA pseudouridine synthase TruA family. In terms of assembly, homodimer.

It carries out the reaction uridine(38/39/40) in tRNA = pseudouridine(38/39/40) in tRNA. Functionally, formation of pseudouridine at positions 38, 39 and 40 in the anticodon stem and loop of transfer RNAs. This chain is tRNA pseudouridine synthase A, found in Vibrio cholerae serotype O1 (strain ATCC 39541 / Classical Ogawa 395 / O395).